The sequence spans 657 residues: MPRYTVHVRGEWLAVPCQDAQLTVGWLGREAVRRYIKNKPDNGGFASVDDARFLVRRCKGLGLLDNEDPLDVALEDNEFVEVVIEGDAMSPDFIPSQPEGVYLYSKYREPEKYIALDGDSLTTEDLVSLGKGHYKIKLTPTAEKRVQKSREVIDRIVEEKTVVYGITTGFGKFARTVIPVSKLEELQFNLVRSHSSGVGKPLSPERCRMLLALRINVLAKGYSGISLGTLKQVIEVFNASCLPYVPEKGTVGASGDLAPLSHLALGLIGEGKMWSPKSGWADAKYVLAAHGLKPIVLKPKEGLALINGTQMITSLGCEAVERASAIARQADIVAALTLEVLKGTTKAFDTDIHAVRPHRGQVEVAFRFRSLLDSDHHPSEIAESHRFCDRVQDAYTLRCCPQVHGVVNDTIAFVKNIITTEINSATDNPMVFASRGETISGGNFHGEYPAKALDYLAIGVHELASISERRIERLCNPSLSELPAFLVAEGGLNSGFMIAHCTAAALVSENKALCHPSSVDSLSTSAATEDHVSMGGWAARKALRVIEHVEQVLAIELLAACQGIEFLRPLKTTTPLEKVYDLVRSVVRPWIKDRFMAPDIEAAHRLLVEQKVWEVAAPYIEKYRMEHIPESRPVSPTAFSLEFLHKKSTKIPESEDL.

The 5-imidazolinone (Ala-Gly) cross-link spans 253–255 (ASG). Position 254 is a 2,3-didehydroalanine (Ser) (S254). The residue at position 396 (T396) is a Phosphothreonine. Position 635 is a phosphoserine (S635). At T637 the chain carries Phosphothreonine. S648 is subject to Phosphoserine.

It belongs to the PAL/histidase family. In terms of processing, contains an active site 4-methylidene-imidazol-5-one (MIO), which is formed autocatalytically by cyclization and dehydration of residues Ala-Ser-Gly.

It catalyses the reaction L-histidine = trans-urocanate + NH4(+). It functions in the pathway amino-acid degradation; L-histidine degradation into L-glutamate; N-formimidoyl-L-glutamate from L-histidine: step 1/3. This Bos taurus (Bovine) protein is Histidine ammonia-lyase (HAL).